We begin with the raw amino-acid sequence, 441 residues long: Putative collagenous domain-containing protein R238 (441 aa).

The 36-residue stretch at 164-199 folds into the Collagen-like domain; it reads GCKGEKGIKGELGPKGNTGQKGDIGSKGDRGDKGEP. Residues 171–198 form a disordered region; it reads IKGELGPKGNTGQKGDIGSKGDRGDKGE. Residues 187–198 are compositionally biased toward basic and acidic residues; sequence IGSKGDRGDKGE.

This is Putative collagenous domain-containing protein R238 from Acanthamoeba polyphaga (Amoeba).